We begin with the raw amino-acid sequence, 154 residues long: 6,7-dimethyl-8-ribityllumazine synthase (154 aa).

5-amino-6-(D-ribitylamino)uracil is bound by residues F22, 56 to 58, and 80 to 82; these read AFE and TVI. Residue 85 to 86 coordinates (2S)-2-hydroxy-3-oxobutyl phosphate; the sequence is ST. The Proton donor role is filled by H88. F113 contacts 5-amino-6-(D-ribitylamino)uracil. Position 127 (R127) interacts with (2S)-2-hydroxy-3-oxobutyl phosphate.

This sequence belongs to the DMRL synthase family.

The enzyme catalyses (2S)-2-hydroxy-3-oxobutyl phosphate + 5-amino-6-(D-ribitylamino)uracil = 6,7-dimethyl-8-(1-D-ribityl)lumazine + phosphate + 2 H2O + H(+). Its pathway is cofactor biosynthesis; riboflavin biosynthesis; riboflavin from 2-hydroxy-3-oxobutyl phosphate and 5-amino-6-(D-ribitylamino)uracil: step 1/2. Its function is as follows. Catalyzes the formation of 6,7-dimethyl-8-ribityllumazine by condensation of 5-amino-6-(D-ribitylamino)uracil with 3,4-dihydroxy-2-butanone 4-phosphate. This is the penultimate step in the biosynthesis of riboflavin. The polypeptide is 6,7-dimethyl-8-ribityllumazine synthase (Lactococcus lactis subsp. cremoris (strain MG1363)).